Consider the following 892-residue polypeptide: Chromodomain-helicase-DNA-binding protein 3 (892 aa).

Residues 1 to 20 (MSSKRGADPDWKTPGKASKD) show a composition bias toward basic and acidic residues. The disordered stretch occupies residues 1–29 (MSSKRGADPDWKTPGKASKDKRPKTNAKK). The segment at 35–82 (EEYCKVCSDGGDLLCCDSCPSVYHRTCLSPPLKSIPKGDWICPRCIPL) adopts a PHD-type zinc-finger fold. Chromo domains follow at residues 84–156 (GKAE…PSLE) and 179–240 (LLVQ…GRQR). The Helicase ATP-binding domain maps to 279–458 (RYSWGQGIPT…FHLLNFLSSG (180 aa)). 292–299 (DEMGLGKT) serves as a coordination point for ATP. Residues 409–412 (DEAH) carry the DEAH box motif. Residues 590-739 (LLSKMLKQLK…LTHLVVRPGM (150 aa)) form the Helicase C-terminal domain. A disordered region spans residues 839–892 (SQPKLPKKQKKQSQQSQVDVESIMGKGKRIRKEIDYSNQYPSPNRATPSSIVLM). Polar residues predominate over residues 874–892 (YSNQYPSPNRATPSSIVLM).

This sequence belongs to the SNF2/RAD54 helicase family. As to quaternary structure, monomer.

Its subcellular location is the nucleus. It localises to the chromosome. The enzyme catalyses ATP + H2O = ADP + phosphate + H(+). With respect to regulation, ATPase activity is stimulated by binding to DNA or nucleosomes, but is strongly activated by nucleosomes. Functionally, ATP-dependent chromatin-remodeling factor which acts in nucleosome-remodeling by catalyzing ATP-dependent nucleosome mobilization. Likely to be involved in the regulation of transcription. The chain is Chromodomain-helicase-DNA-binding protein 3 from Drosophila melanogaster (Fruit fly).